A 390-amino-acid chain; its full sequence is Succinate--CoA ligase [ADP-forming] subunit beta (390 aa).

Residues 9–248 form the ATP-grasp domain; that stretch reads KEILRRHKAN…ITEEDPLEVQ (240 aa). ATP is bound by residues lysine 50, 57–59, glutamate 103, isoleucine 106, and glutamate 111; that span reads GRG. Mg(2+) contacts are provided by asparagine 203 and aspartate 217. Substrate contacts are provided by residues asparagine 268 and 325–327; that span reads GIV.

This sequence belongs to the succinate/malate CoA ligase beta subunit family. In terms of assembly, heterotetramer of two alpha and two beta subunits. It depends on Mg(2+) as a cofactor.

The enzyme catalyses succinate + ATP + CoA = succinyl-CoA + ADP + phosphate. It carries out the reaction GTP + succinate + CoA = succinyl-CoA + GDP + phosphate. Its pathway is carbohydrate metabolism; tricarboxylic acid cycle; succinate from succinyl-CoA (ligase route): step 1/1. Its function is as follows. Succinyl-CoA synthetase functions in the citric acid cycle (TCA), coupling the hydrolysis of succinyl-CoA to the synthesis of either ATP or GTP and thus represents the only step of substrate-level phosphorylation in the TCA. The beta subunit provides nucleotide specificity of the enzyme and binds the substrate succinate, while the binding sites for coenzyme A and phosphate are found in the alpha subunit. This Leptospira interrogans serogroup Icterohaemorrhagiae serovar copenhageni (strain Fiocruz L1-130) protein is Succinate--CoA ligase [ADP-forming] subunit beta.